A 244-amino-acid chain; its full sequence is ATP synthase subunit a (244 aa).

7 helical membrane passes run 20-40 (FFDVSITTITVYLGLLMVIVI), 81-101 (GILFFPFIMSLFLFVLTLNVM), 113-133 (QLLVTFTLAITIMIGITIWGF), 140-160 (FLNIFVPSGIEPWLLPLLVFI), 176-196 (LFANMLAGHLLIHIIGVAAIY), 202-222 (FIGILPWICVIAFMFLELGIA), and 223-243 (FLQAYVFVLLTLIYIANIINL).

Belongs to the ATPase A chain family. In terms of assembly, F-type ATPases have 2 components, CF(1) - the catalytic core - and CF(0) - the membrane proton channel. CF(1) has five subunits: alpha(3), beta(3), gamma(1), delta(1), epsilon(1). CF(0) has three main subunits: a, b and c.

The protein resides in the mitochondrion inner membrane. Mitochondrial membrane ATP synthase (F(1)F(0) ATP synthase or Complex V) produces ATP from ADP in the presence of a proton gradient across the membrane which is generated by electron transport complexes of the respiratory chain. F-type ATPases consist of two structural domains, F(1) - containing the extramembraneous catalytic core and F(0) - containing the membrane proton channel, linked together by a central stalk and a peripheral stalk. During catalysis, ATP synthesis in the catalytic domain of F(1) is coupled via a rotary mechanism of the central stalk subunits to proton translocation. Key component of the proton channel; it may play a direct role in the translocation of protons across the membrane. The chain is ATP synthase subunit a (atp6) from Dictyostelium citrinum (Slime mold).